The following is a 439-amino-acid chain: Lipid-A-disaccharide synthase (439 aa).

Positions 1–35 (MKEIGNRESGIVDGQRNGASVGSDPTALPIPHSPL) are disordered.

Belongs to the LpxB family.

The enzyme catalyses a lipid X + a UDP-2-N,3-O-bis[(3R)-3-hydroxyacyl]-alpha-D-glucosamine = a lipid A disaccharide + UDP + H(+). It participates in bacterial outer membrane biogenesis; LPS lipid A biosynthesis. In terms of biological role, condensation of UDP-2,3-diacylglucosamine and 2,3-diacylglucosamine-1-phosphate to form lipid A disaccharide, a precursor of lipid A, a phosphorylated glycolipid that anchors the lipopolysaccharide to the outer membrane of the cell. This chain is Lipid-A-disaccharide synthase, found in Xanthomonas euvesicatoria pv. vesicatoria (strain 85-10) (Xanthomonas campestris pv. vesicatoria).